Reading from the N-terminus, the 217-residue chain is UPF0502 protein VIBHAR_05349 (217 aa).

This sequence belongs to the UPF0502 family.

The protein is UPF0502 protein VIBHAR_05349 of Vibrio campbellii (strain ATCC BAA-1116).